Consider the following 226-residue polypeptide: PKHD-type hydroxylase PFL_0865 (226 aa).

Residues 78–178 (KVFPPLINCY…RYASFFWTQS (101 aa)) enclose the Fe2OG dioxygenase domain. Fe cation-binding residues include His-96, Asp-98, and His-159. Arg-169 serves as a coordination point for 2-oxoglutarate.

Fe(2+) is required as a cofactor. It depends on L-ascorbate as a cofactor.

The sequence is that of PKHD-type hydroxylase PFL_0865 from Pseudomonas fluorescens (strain ATCC BAA-477 / NRRL B-23932 / Pf-5).